The sequence spans 114 residues: Hydrogenase maturation factor HypA (114 aa).

Histidine 2 serves as a coordination point for Ni(2+). Zn(2+) contacts are provided by cysteine 70, cysteine 73, cysteine 86, and cysteine 89.

The protein belongs to the HypA/HybF family.

Involved in the maturation of [NiFe] hydrogenases. Required for nickel insertion into the metal center of the hydrogenase. The protein is Hydrogenase maturation factor HypA of Crocosphaera subtropica (strain ATCC 51142 / BH68) (Cyanothece sp. (strain ATCC 51142)).